We begin with the raw amino-acid sequence, 601 residues long: MTTQAPPSNLLPLNPEQLARLQAATTDFSPTQLAWVSGYFWGMLNQQPGAVVNAPATAVEIPAITLISASQTGNARRVAEALRDDLLAAKLNVNLVNAGDYKFKQIASEKLVVVVASTQGEGEPAEEAVALHKFLFSKKAPKLDGTAFAVFGLGDTSYEFFCQSGKDFDSKLAELGAERLLDRVDADVEYQAAAAEWRARIVDVLKARVPKDTPAQAANSASGAVNEVSTSPYTKEEPLVASLSVNQKITGRDSEKDVRHIEIDLGDSGLRYQPGDALGVWYQNDPALVKELVELLWLKGTEQVNVEGKTLPLSEALQWHFELTVNTANIVENYATLTRSETLLPLVGDKAKLQHYAATTPIVDMVRFSPAQLDAEALIGLLRPLTPRLYSIASSQAEVESEVHITVGAVRFDIEGRARAGGASSFLADRVEEEGEVRVFIEHNDNFRLPANPETPVIMIGPGTGIAPFRAFMQQRAAEEAPGKNWLFFGNPHFTEDFLYQVEWQRYVKEGVLSRIDLAWSRDQKQKIYVQDKLREQGAELWAWINNGAHLYVCGDANRMAKDVEQALLEVIAEFGGMDIETADEFLSELRVERRYQRDVY.

Residues 64 to 202 (ITLISASQTG…AAAEWRARIV (139 aa)) enclose the Flavodoxin-like domain. FMN contacts are provided by residues 70–75 (SQTGNA), 117–120 (STQG), and 153–162 (LGDTSYEFFC). In terms of domain architecture, FAD-binding FR-type spans 236–450 (EEPLVASLSV…IEHNDNFRLP (215 aa)). FAD is bound by residues Thr324, Ala358, 388–391 (RLYS), 406–408 (TVG), and 421–424 (GGAS). NADP(+) contacts are provided by residues 521–522 (SR), 527–531 (KIYVQ), and Asp563. Tyr601 contributes to the FAD binding site.

This sequence belongs to the NADPH-dependent sulphite reductase flavoprotein subunit CysJ family. It in the N-terminal section; belongs to the flavodoxin family. In the C-terminal section; belongs to the flavoprotein pyridine nucleotide cytochrome reductase family. In terms of assembly, alpha(8)-beta(8). The alpha component is a flavoprotein, the beta component is a hemoprotein. Requires FAD as cofactor. It depends on FMN as a cofactor.

It catalyses the reaction hydrogen sulfide + 3 NADP(+) + 3 H2O = sulfite + 3 NADPH + 4 H(+). It functions in the pathway sulfur metabolism; hydrogen sulfide biosynthesis; hydrogen sulfide from sulfite (NADPH route): step 1/1. Its function is as follows. Component of the sulfite reductase complex that catalyzes the 6-electron reduction of sulfite to sulfide. This is one of several activities required for the biosynthesis of L-cysteine from sulfate. The flavoprotein component catalyzes the electron flow from NADPH -&gt; FAD -&gt; FMN to the hemoprotein component. This is Sulfite reductase [NADPH] flavoprotein alpha-component from Enterobacter sp. (strain 638).